The chain runs to 310 residues: MSEDAVKNAILIAGPTASGKSALAIRMAKATGGFIVNTDSMQVYGVLDLLTARPSRADLAEAEHFLYGHVPPSSTYSTGKWFEDVEALLGRCELQGRVPIFVGGTGLYFRALLGGLSQTPEVSAQVRDHWRGRMEAEGAKALHAVLCVRDPAIAAALQPSDSQRIVRALEVLESTGKSLLEWQKVKGRALVDDQSAQKIVLRPDRAWLGERIARRFSAMWAEGAIDEVRALLALDLDPALPAMKAIGVREVSAFLAETMSREEAIERSVIATRQYAKRQSTWFRNQLGEDWRVYASGEEVFQGGSFRDPQ.

Gly-14 to Ser-21 provides a ligand contact to ATP. Position 16-21 (Thr-16–Ser-21) interacts with substrate. Interaction with substrate tRNA regions lie at residues Asp-39–Gln-42 and Gln-163–Arg-167.

The protein belongs to the IPP transferase family. As to quaternary structure, monomer. Mg(2+) is required as a cofactor.

The catalysed reaction is adenosine(37) in tRNA + dimethylallyl diphosphate = N(6)-dimethylallyladenosine(37) in tRNA + diphosphate. Functionally, catalyzes the transfer of a dimethylallyl group onto the adenine at position 37 in tRNAs that read codons beginning with uridine, leading to the formation of N6-(dimethylallyl)adenosine (i(6)A). This is tRNA dimethylallyltransferase from Brucella abortus (strain S19).